The sequence spans 200 residues: Imidazoleglycerol-phosphate dehydratase (200 aa).

Belongs to the imidazoleglycerol-phosphate dehydratase family.

It is found in the cytoplasm. It catalyses the reaction D-erythro-1-(imidazol-4-yl)glycerol 3-phosphate = 3-(imidazol-4-yl)-2-oxopropyl phosphate + H2O. It participates in amino-acid biosynthesis; L-histidine biosynthesis; L-histidine from 5-phospho-alpha-D-ribose 1-diphosphate: step 6/9. The polypeptide is Imidazoleglycerol-phosphate dehydratase (Chlorobium phaeovibrioides (strain DSM 265 / 1930) (Prosthecochloris vibrioformis (strain DSM 265))).